An 84-amino-acid chain; its full sequence is Small ribosomal subunit protein uS17 (84 aa).

This sequence belongs to the universal ribosomal protein uS17 family. As to quaternary structure, part of the 30S ribosomal subunit.

One of the primary rRNA binding proteins, it binds specifically to the 5'-end of 16S ribosomal RNA. This chain is Small ribosomal subunit protein uS17, found in Thermoanaerobacter pseudethanolicus (strain ATCC 33223 / 39E) (Clostridium thermohydrosulfuricum).